Consider the following 401-residue polypeptide: Imidazolonepropionase (401 aa).

His-70 and His-72 together coordinate Fe(3+). Residues His-70 and His-72 each contribute to the Zn(2+) site. Arg-79, Tyr-142, and His-175 together coordinate 4-imidazolone-5-propanoate. Tyr-142 is a binding site for N-formimidoyl-L-glutamate. His-238 provides a ligand contact to Fe(3+). His-238 contacts Zn(2+). A 4-imidazolone-5-propanoate-binding site is contributed by Gln-241. Residue Asp-313 coordinates Fe(3+). Asp-313 is a Zn(2+) binding site. N-formimidoyl-L-glutamate is bound by residues Asn-315 and Gly-317. Thr-318 contacts 4-imidazolone-5-propanoate.

It belongs to the metallo-dependent hydrolases superfamily. HutI family. It depends on Zn(2+) as a cofactor. The cofactor is Fe(3+).

It localises to the cytoplasm. The enzyme catalyses 4-imidazolone-5-propanoate + H2O = N-formimidoyl-L-glutamate. It participates in amino-acid degradation; L-histidine degradation into L-glutamate; N-formimidoyl-L-glutamate from L-histidine: step 3/3. Catalyzes the hydrolytic cleavage of the carbon-nitrogen bond in imidazolone-5-propanoate to yield N-formimidoyl-L-glutamate. It is the third step in the universal histidine degradation pathway. This Xanthomonas euvesicatoria pv. vesicatoria (strain 85-10) (Xanthomonas campestris pv. vesicatoria) protein is Imidazolonepropionase.